We begin with the raw amino-acid sequence, 198 residues long: MFKVIQRSVGPASLSLLTFKVYAAPKKDSPPKNSVKVDELSLYSVPEGQSKYVEEARSQLEESISQLRHYCEPYTTWCQETYSQTKPKMQSLVQWGLDSYDYLQNAPPGFFPRLGVIGFAGLIGLLLARGSKIKKLVYPPGFMGLAASLYYPQQAIVFAQVSGERLYDWGLRGYIVIEDLWKENFQKPGNVKNSPGTK.

A signal peptide spans 1 to 25 (MFKVIQRSVGPASLSLLTFKVYAAP). A helical membrane pass occupies residues 108 to 128 (PGFFPRLGVIGFAGLIGLLLA). S162 carries O-linked (Xyl...) (chondroitin sulfate) serine glycosylation.

It belongs to the apolipoprotein O/MICOS complex subunit Mic27 family. In terms of assembly, component of the mitochondrial contact site and cristae organizing system (MICOS) complex, composed of at least MICOS10/MIC10, CHCHD3/MIC19, CHCHD6/MIC25, APOOL/MIC27, IMMT/MIC60, APOO/MIC23/MIC26 and MICOS13/MIC13. This complex was also known under the names MINOS or MitOS complex. he MICOS complex associates with mitochondrial outer membrane proteins SAMM50, MTX1 and MTX2 (together described as components of the mitochondrial outer membrane sorting assembly machinery (SAM) complex) and DNAJC11, mitochondrial inner membrane protein TMEM11 and with HSPA9. The MICOS and SAM complexes together with DNAJC11 are part of a large protein complex spanning both membranes termed the mitochondrial intermembrane space bridging (MIB) complex. Interacts with IMMT/MIC60. Interacts with MICOS10/MIC10 and APOOL/MIC27. In terms of processing, O-glycosylation; glycosaminoglycan of chondroitin-sulfate type. As to expression, expressed in all tissues examined. Up-regulated in diabetic heart.

Its subcellular location is the mitochondrion inner membrane. The protein localises to the secreted. The protein resides in the mitochondrion. It is found in the golgi apparatus membrane. It localises to the endoplasmic reticulum membrane. In terms of biological role, component of the MICOS complex, a large protein complex of the mitochondrial inner membrane that plays crucial roles in the maintenance of crista junctions, inner membrane architecture, and formation of contact sites to the outer membrane. Plays a crucial role in crista junction formation and mitochondrial function. Can promote cardiac lipotoxicity by enhancing mitochondrial respiration and fatty acid metabolism in cardiac myoblasts. Promotes cholesterol efflux from macrophage cells. Detected in HDL, LDL and VLDL. Secreted by a microsomal triglyceride transfer protein (MTTP)-dependent mechanism, probably as a VLDL-associated protein that is subsequently transferred to HDL. The chain is MICOS complex subunit MIC26 (APOO) from Homo sapiens (Human).